The primary structure comprises 1257 residues: Pesticidal crystal protein Cry12Aa (1257 aa).

This sequence belongs to the delta endotoxin family.

Its function is as follows. Endotoxin with nematicidal activity. The chain is Pesticidal crystal protein Cry12Aa (cry12Aa) from Bacillus thuringiensis.